The following is an 88-amino-acid chain: Small ribosomal subunit protein bS16 (88 aa).

Belongs to the bacterial ribosomal protein bS16 family.

This is Small ribosomal subunit protein bS16 from Geobacter sulfurreducens (strain ATCC 51573 / DSM 12127 / PCA).